Here is a 367-residue protein sequence, read N- to C-terminus: 3-dehydroquinate synthase (367 aa).

NAD(+)-binding positions include 108 to 112 (GVIGD), 132 to 133 (TT), Lys-145, and Lys-154. Zn(2+) is bound by residues Glu-187, His-249, and His-267.

The protein belongs to the sugar phosphate cyclases superfamily. Dehydroquinate synthase family. Co(2+) is required as a cofactor. The cofactor is Zn(2+). NAD(+) serves as cofactor.

The protein localises to the cytoplasm. It catalyses the reaction 7-phospho-2-dehydro-3-deoxy-D-arabino-heptonate = 3-dehydroquinate + phosphate. The protein operates within metabolic intermediate biosynthesis; chorismate biosynthesis; chorismate from D-erythrose 4-phosphate and phosphoenolpyruvate: step 2/7. Catalyzes the conversion of 3-deoxy-D-arabino-heptulosonate 7-phosphate (DAHP) to dehydroquinate (DHQ). The chain is 3-dehydroquinate synthase from Paracoccus denitrificans (strain Pd 1222).